The chain runs to 214 residues: Riboflavin kinase (214 aa).

A disordered region spans residues 1–26; the sequence is MRPDGPRDPVAGPDSGPEPPYPVRLS. The Mg(2+) site is built by T44 and N46. E116 functions as the Nucleophile in the catalytic mechanism.

Belongs to the flavokinase family. Requires Zn(2+) as cofactor. It depends on Mg(2+) as a cofactor.

It carries out the reaction riboflavin + ATP = FMN + ADP + H(+). Its pathway is cofactor biosynthesis; FMN biosynthesis; FMN from riboflavin (ATP route): step 1/1. Functionally, catalyzes the phosphorylation of riboflavin (vitamin B2) to form flavin mononucleotide (FMN) coenzyme. The chain is Riboflavin kinase (fmn1) from Aspergillus fumigatus (strain ATCC MYA-4609 / CBS 101355 / FGSC A1100 / Af293) (Neosartorya fumigata).